The chain runs to 195 residues: Probable GTP-binding protein EngB (195 aa).

The EngB-type G domain occupies 22–194 (LKGEVAFVGR…LDLISTLLKE (173 aa)). Residues 30–37 (GRSNVGKS), 56–60 (GKTRS), 74–77 (DLPG), 141–144 (TKMD), and 173–175 (TSS) contribute to the GTP site. Mg(2+)-binding residues include Ser37 and Thr58.

It belongs to the TRAFAC class TrmE-Era-EngA-EngB-Septin-like GTPase superfamily. EngB GTPase family. It depends on Mg(2+) as a cofactor.

Necessary for normal cell division and for the maintenance of normal septation. The protein is Probable GTP-binding protein EngB of Thermotoga maritima (strain ATCC 43589 / DSM 3109 / JCM 10099 / NBRC 100826 / MSB8).